A 177-amino-acid chain; its full sequence is ATP synthase subunit delta (177 aa).

This sequence belongs to the ATPase delta chain family. In terms of assembly, F-type ATPases have 2 components, F(1) - the catalytic core - and F(0) - the membrane proton channel. F(1) has five subunits: alpha(3), beta(3), gamma(1), delta(1), epsilon(1). F(0) has three main subunits: a(1), b(2) and c(10-14). The alpha and beta chains form an alternating ring which encloses part of the gamma chain. F(1) is attached to F(0) by a central stalk formed by the gamma and epsilon chains, while a peripheral stalk is formed by the delta and b chains.

The protein resides in the cell membrane. In terms of biological role, f(1)F(0) ATP synthase produces ATP from ADP in the presence of a proton or sodium gradient. F-type ATPases consist of two structural domains, F(1) containing the extramembraneous catalytic core and F(0) containing the membrane proton channel, linked together by a central stalk and a peripheral stalk. During catalysis, ATP synthesis in the catalytic domain of F(1) is coupled via a rotary mechanism of the central stalk subunits to proton translocation. Its function is as follows. This protein is part of the stalk that links CF(0) to CF(1). It either transmits conformational changes from CF(0) to CF(1) or is implicated in proton conduction. This Buchnera aphidicola subsp. Acyrthosiphon pisum (strain APS) (Acyrthosiphon pisum symbiotic bacterium) protein is ATP synthase subunit delta.